The following is a 160-amino-acid chain: Nucleotide-binding protein VV1_2655 (160 aa).

It belongs to the YajQ family.

Nucleotide-binding protein. The polypeptide is Nucleotide-binding protein VV1_2655 (Vibrio vulnificus (strain CMCP6)).